Consider the following 445-residue polypeptide: Tryptamine benzoyltransferase 1 (445 aa).

Residues His150 and Asp382 each act as proton acceptor in the active site.

This sequence belongs to the plant acyltransferase family.

Its function is as follows. Hydroxycinnamoyl transferase that catalyzes the transfer of an acyl from benzoyl-CoA to tryptamine, to produce benzoyl tryptamine. Serotonin and tyramine serve as acyl acceptors in vitro. Can use p-coumaroyl-CoA, and to a lesser extent caffeoyl-CoA, as acyl donors. The protein is Tryptamine benzoyltransferase 1 of Oryza sativa subsp. japonica (Rice).